The primary structure comprises 446 residues: Nuclear distribution protein nudF (446 aa).

In terms of domain architecture, LisH spans 9–41 (QAEELHKSMVAYLSSIKASQSSNTLREELGIGD). The stretch at 60–86 (TGIARLQRKILDLESKITSLQAELDSV) forms a coiled coil. WD repeat units follow at residues 113–154 (SHRD…RTLK), 156–196 (HMRG…ANIR), 200–240 (GHDH…CVRT), 243–282 (SNSI…PRAA), 285–345 (GHDN…IKTL), 347–386 (GHDN…RLVK), 391–430 (AHGH…PAFQ), and 432–446 (VIAT…RVFK).

This sequence belongs to the WD repeat LIS1/nudF family. As to quaternary structure, self-associates. Interacts with nudE and dynein.

The protein localises to the cytoplasm. It is found in the cytoskeleton. It localises to the spindle pole. Functionally, positively regulates the activity of the minus-end directed microtubule motor protein dynein. May enhance dynein-mediated microtubule sliding by targeting dynein to the microtubule plus end. Required for nuclear migration during vegetative growth as well as development. Required for retrograde early endosome (EE) transport from the hyphal tip. Required for localization of dynein to the mitotic spindle poles. Recruits additional proteins to the dynein complex at SPBs. This Aspergillus terreus (strain NIH 2624 / FGSC A1156) protein is Nuclear distribution protein nudF.